A 216-amino-acid chain; its full sequence is ATP phosphoribosyltransferase (216 aa).

Belongs to the ATP phosphoribosyltransferase family. Short subfamily. In terms of assembly, heteromultimer composed of HisG and HisZ subunits.

It is found in the cytoplasm. The enzyme catalyses 1-(5-phospho-beta-D-ribosyl)-ATP + diphosphate = 5-phospho-alpha-D-ribose 1-diphosphate + ATP. It functions in the pathway amino-acid biosynthesis; L-histidine biosynthesis; L-histidine from 5-phospho-alpha-D-ribose 1-diphosphate: step 1/9. Its function is as follows. Catalyzes the condensation of ATP and 5-phosphoribose 1-diphosphate to form N'-(5'-phosphoribosyl)-ATP (PR-ATP). Has a crucial role in the pathway because the rate of histidine biosynthesis seems to be controlled primarily by regulation of HisG enzymatic activity. In Thiobacillus denitrificans (strain ATCC 25259 / T1), this protein is ATP phosphoribosyltransferase.